The chain runs to 360 residues: Photosystem II protein D1 (360 aa).

3 consecutive transmembrane segments (helical) span residues 29-46 (YIGWFGCLMFPTLLTATS), 118-133 (HFLLGVASYMGREWEL), and 142-156 (WIFVAFSAPVAAASA). His-118 is a binding site for chlorophyll a. Tyr-126 is a pheophytin a binding site. [CaMn4O5] cluster-binding residues include Asp-170 and Glu-189. A helical transmembrane segment spans residues 197–218 (FHMAGVAGVFGGSLFSAMHGSL). His-198 is a binding site for chlorophyll a. Residues His-215 and 264-265 (SF) contribute to the a quinone site. Residue His-215 coordinates Fe cation. Position 272 (His-272) interacts with Fe cation. The chain crosses the membrane as a helical span at residues 274 to 288 (FLALWPVLGIWLTAM). 4 residues coordinate [CaMn4O5] cluster: His-332, Glu-333, Asp-342, and Ala-344. Residues 345 to 360 (SGDVLPVAFTAPAVNA) constitute a propeptide that is removed on maturation.

This sequence belongs to the reaction center PufL/M/PsbA/D family. PSII is composed of 1 copy each of membrane proteins PsbA, PsbB, PsbC, PsbD, PsbE, PsbF, PsbH, PsbI, PsbJ, PsbK, PsbL, PsbM, PsbT, PsbX, PsbY, PsbZ, Psb30/Ycf12, at least 3 peripheral proteins of the oxygen-evolving complex and a large number of cofactors. It forms dimeric complexes. Requires The D1/D2 heterodimer binds P680, chlorophylls that are the primary electron donor of PSII, and subsequent electron acceptors. It shares a non-heme iron and each subunit binds pheophytin, quinone, additional chlorophylls, carotenoids and lipids. D1 provides most of the ligands for the Mn4-Ca-O5 cluster of the oxygen-evolving complex (OEC). There is also a Cl(-1) ion associated with D1 and D2, which is required for oxygen evolution. The PSII complex binds additional chlorophylls, carotenoids and specific lipids. as cofactor. In terms of processing, tyr-161 forms a radical intermediate that is referred to as redox-active TyrZ, YZ or Y-Z. Post-translationally, C-terminally processed by CTPA; processing is essential to allow assembly of the oxygen-evolving complex and thus photosynthetic growth.

It is found in the plastid. The protein resides in the chloroplast thylakoid membrane. The catalysed reaction is 2 a plastoquinone + 4 hnu + 2 H2O = 2 a plastoquinol + O2. Its function is as follows. Photosystem II (PSII) is a light-driven water:plastoquinone oxidoreductase that uses light energy to abstract electrons from H(2)O, generating O(2) and a proton gradient subsequently used for ATP formation. It consists of a core antenna complex that captures photons, and an electron transfer chain that converts photonic excitation into a charge separation. The D1/D2 (PsbA/PsbD) reaction center heterodimer binds P680, the primary electron donor of PSII as well as several subsequent electron acceptors. The polypeptide is Photosystem II protein D1 (Thalassiosira pseudonana (Marine diatom)).